We begin with the raw amino-acid sequence, 343 residues long: Sulfate/thiosulfate import ATP-binding protein CysA (343 aa).

The region spanning 3 to 233 is the ABC transporter domain; that stretch reads ILIENISKTF…PATPFVMGFM (231 aa). 35–42 contacts ATP; sequence GPSGSGKS.

This sequence belongs to the ABC transporter superfamily. Sulfate/tungstate importer (TC 3.A.1.6) family.

It is found in the plastid. Its subcellular location is the chloroplast. It carries out the reaction sulfate(out) + ATP + H2O = sulfate(in) + ADP + phosphate + H(+). The enzyme catalyses thiosulfate(out) + ATP + H2O = thiosulfate(in) + ADP + phosphate + H(+). Part of the ABC transporter complex involved in sulfate/thiosulfate import. Responsible for energy coupling to the transport system. In Nephroselmis olivacea (Green alga), this protein is Sulfate/thiosulfate import ATP-binding protein CysA.